Here is a 229-residue protein sequence, read N- to C-terminus: Ribonuclease 3 (229 aa).

In terms of domain architecture, RNase III spans 5–127 (LARLERKLGY…LIGAIYLDAD (123 aa)). Glutamate 40 provides a ligand contact to Mg(2+). Aspartate 44 is a catalytic residue. 2 residues coordinate Mg(2+): aspartate 113 and glutamate 116. Residue glutamate 116 is part of the active site. Positions 154–224 (DPKTRLQEFL…AAAALIALGV (71 aa)) constitute a DRBM domain.

It belongs to the ribonuclease III family. Homodimer. It depends on Mg(2+) as a cofactor.

It localises to the cytoplasm. It catalyses the reaction Endonucleolytic cleavage to 5'-phosphomonoester.. In terms of biological role, digests double-stranded RNA. Involved in the processing of primary rRNA transcript to yield the immediate precursors to the large and small rRNAs (23S and 16S). Processes some mRNAs, and tRNAs when they are encoded in the rRNA operon. Processes pre-crRNA and tracrRNA of type II CRISPR loci if present in the organism. The polypeptide is Ribonuclease 3 (Pseudomonas putida (strain W619)).